The following is a 409-amino-acid chain: Growth-regulating factor 8 (409 aa).

2 stretches are compositionally biased toward gly residues: residues 1 to 10 and 27 to 36; these read MLSSCGGHGH and QQGGGGGGGQ. The interval 1–81 is disordered; the sequence is MLSSCGGHGH…GGGGQMLSFS (81 aa). A compositionally biased stretch (low complexity) spans 56–68; the sequence is SSSSFLGSTSSSC. A QLQ domain is found at 107–142; it reads PFTPTQWMELEHQALIYKHIAANVSVPSSLLLPIRR. A WRC domain is found at 158–202; that stretch reads DVEPRRCRRTDGKKWRCSRDAVGDQKYCERHINRGRHRSRKHVEG. 2 short sequence motifs (bipartite nuclear localization signal) span residues 163–173 and 191–198; these read RCRRTDGKKWR and RGRHRSRK. The interval 221-242 is disordered; sequence SSRGHTVARQKQVKGSAATVSD.

This sequence belongs to the GRF family.

Its subcellular location is the nucleus. Transcription activator that plays a regulatory role in gibberellin-induced stem elongation. In Oryza sativa subsp. japonica (Rice), this protein is Growth-regulating factor 8 (GRF8).